Consider the following 495-residue polypeptide: Cytochrome P450 monooxygenase BOA4 (495 aa).

The helical transmembrane segment at 12–31 threads the bilayer; it reads LANSNTVIAGCIVFALYYLF. N-linked (GlcNAc...) asparagine glycosylation occurs at Asn115. Cys439 provides a ligand contact to heme.

Belongs to the cytochrome P450 family. Requires heme as cofactor.

The protein localises to the membrane. It participates in polyketide biosynthesis. In terms of biological role, cytochrome P450 monooxygenase; part of the gene cluster A that mediates the biosynthesis of botcinic acid and its botcinin derivatives, acetate-derived polyketides that contribute to virulence when combined with the sesquiterpene botrydial. Botcinic acid and its derivatives have been shown to induce chlorosis and necrosis during host plant infection, but also have antifungal activities. Two polyketide synthases, BOA6 and BOA9, are involved in the biosynthesis of botcinins. BOA6 mediates the formation of the per-methylated tetraketide core by condensation of four units of malonyl-CoA with one unit of acetyl-CoA, which would be methylated in activated methylene groups to yield a bicyclic acid intermediate that could then either be converted to botrylactone derivatives or lose the starter acetate unit through a retro-Claisen type C-C bond cleavage to yield botcinin derivatives. The second polyketide synthase, BOA9, is probably required for the biosynthesis of the tetraketide side chain of botcinins. The methyltransferase (MT) domain within BOA6 is probably responsible for the incorporation of four methyl groups. The trans-enoyl reductase BOA5 might take over the enoyl reductase function of BOA6 that misses an ER domain. The monooxygenases BOA2, BOA3 and BOA4 might be involved in further hydroxylations at C4, C5 and C8, whereas BOA7, close to BOA9, could potentially be involved in the hydroxylation at C4 in the side chain of botcinins. The sequence is that of Cytochrome P450 monooxygenase BOA4 from Botryotinia fuckeliana (strain B05.10) (Noble rot fungus).